Reading from the N-terminus, the 383-residue chain is Corticosteroid-binding globulin (383 aa).

Asn74 and Asn154 each carry an N-linked (GlcNAc...) asparagine glycan. Gln232 is a cortisol binding site. Asn238 is a glycosylation site (N-linked (GlcNAc...) asparagine). Gln264 serves as a coordination point for cortisol. An N-linked (GlcNAc...) asparagine glycan is attached at Asn308. Trp371 contacts cortisol.

It belongs to the serpin family. As to expression, produced and secreted by hepatocytes, but has also been identified in a number of glycocorticoid responsive cells (it is found in maternal lung, spleen, and ovary and fetal kidney).

It is found in the secreted. Major transport protein for glucocorticoids and progestins in the blood of almost all vertebrate species. This Oryctolagus cuniculus (Rabbit) protein is Corticosteroid-binding globulin (SERPINA6).